The chain runs to 490 residues: GTPase Der (490 aa).

EngA-type G domains are found at residues 3–166 and 203–376; these read PVVA…MEDL and IKLA…DSST. Residues 9 to 16, 56 to 60, 118 to 121, 209 to 216, 256 to 260, and 321 to 324 contribute to the GTP site; these read GRPNVGKS, DTGGI, NKTD, DTAGV, and NKWD. The region spanning 377–461 is the KH-like domain; the sequence is RRVGTSMLTR…PIRIQFKEGE (85 aa).

Belongs to the TRAFAC class TrmE-Era-EngA-EngB-Septin-like GTPase superfamily. EngA (Der) GTPase family. In terms of assembly, associates with the 50S ribosomal subunit.

Its function is as follows. GTPase that plays an essential role in the late steps of ribosome biogenesis. The chain is GTPase Der from Escherichia coli O157:H7.